The following is a 153-amino-acid chain: Endoribonuclease YbeY (153 aa).

Residues His-116, His-120, and His-126 each coordinate Zn(2+).

The protein belongs to the endoribonuclease YbeY family. It depends on Zn(2+) as a cofactor.

The protein localises to the cytoplasm. Functionally, single strand-specific metallo-endoribonuclease involved in late-stage 70S ribosome quality control and in maturation of the 3' terminus of the 16S rRNA. The protein is Endoribonuclease YbeY of Clavibacter michiganensis subsp. michiganensis (strain NCPPB 382).